A 461-amino-acid chain; its full sequence is SWM histone demethylase complex subunit phf1 (461 aa).

The disordered stretch occupies residues 79 to 130; that stretch reads PYGGMTMPASSSSGATSVPPEQDPSLSVSFNRLPKSASTKTKNGRIRSSRRE. Over residues 102–119 the composition is skewed to polar residues; that stretch reads PSLSVSFNRLPKSASTKT. The PHD-type zinc finger occupies 190-246; the sequence is VTLCSVCQRGHSPLSNRIVFCDGCNSPYHQLCHHPPIDDATVQDVDAEWFCMKCQYR.

As to quaternary structure, component of the SWM histone demethylase complex composed of at least lsd1, lsd2, phf1 and phf2.

The protein resides in the nucleus. Component of the SWM histone demethylase complex that specifically demethylates H3K9me2, a specific tag for epigenetic transcriptional activation, thereby acting as a corepressor. Has a role in regulating heterochromatin propagation and euchromatic transcription. This is SWM histone demethylase complex subunit phf1 (phf1) from Schizosaccharomyces pombe (strain 972 / ATCC 24843) (Fission yeast).